The primary structure comprises 233 residues: MGQKVHRNGIRLGIVKPWNSTWFANTKEFADNLDSDFKVRQYLTKELAKASVSRIVIERPAKSIRVTIHTARPGIVIGKKGEDVEKLRKVVADIAGVPAQINIAEVRKPELDAKLVADSITSQLERRVMFRRAMKRAVQNAMRLGAKGIKVEVSGRLGGAEIARTEWYREGRVPLHTLRADIDYNTSEAHTTYGVIGVKVWIFKGEILGGMAAVEQPEKPAAQPKKQQRKGRK.

Residues 28–96 (EFADNLDSDF…LRKVVADIAG (69 aa)) form the KH type-2 domain.

It belongs to the universal ribosomal protein uS3 family. As to quaternary structure, part of the 30S ribosomal subunit. Forms a tight complex with proteins S10 and S14.

Its function is as follows. Binds the lower part of the 30S subunit head. Binds mRNA in the 70S ribosome, positioning it for translation. This Shigella flexneri protein is Small ribosomal subunit protein uS3.